Here is a 444-residue protein sequence, read N- to C-terminus: Methionine aminopeptidase 2-1 (444 aa).

A disordered region spans residues 1-92 (MAAQVTEKLQ…VPVSNLFPNN (92 aa)). The span at 15 to 29 (NGQNGDAKANSTAVG) shows a compositional bias: polar residues. Over residues 34-45 (GEAEDDSDDEKE) the composition is skewed to acidic residues. A compositionally biased stretch (basic residues) spans 59–73 (AKKKKRKSKKKKKGG). His197 is a substrate binding site. Residues Asp217, Asp228, and His297 each contribute to the a divalent metal cation site. His305 contacts substrate. A divalent metal cation is bound by residues Glu330 and Glu425.

Belongs to the peptidase M24A family. Methionine aminopeptidase eukaryotic type 2 subfamily. The cofactor is Co(2+). Zn(2+) serves as cofactor. Requires Mn(2+) as cofactor. Fe(2+) is required as a cofactor.

It localises to the cytoplasm. The catalysed reaction is Release of N-terminal amino acids, preferentially methionine, from peptides and arylamides.. Cotranslationally removes the N-terminal methionine from nascent proteins. The N-terminal methionine is often cleaved when the second residue in the primary sequence is small and uncharged (Met-Ala-, Cys, Gly, Pro, Ser, Thr, or Val). This is Methionine aminopeptidase 2-1 from Neosartorya fischeri (strain ATCC 1020 / DSM 3700 / CBS 544.65 / FGSC A1164 / JCM 1740 / NRRL 181 / WB 181) (Aspergillus fischerianus).